The sequence spans 671 residues: Carbohydrate acetyl esterase/feruloyl esterase (671 aa).

The signal sequence occupies residues 1 to 24 (MYQSTLKTILLASALLILPASMSA). A carbohydrate acetyl esterase region spans residues 1–296 (MYQSTLKTIL…YGEAVARHLG (296 aa)). Active-site for acetyl esterase activity residues include Ser-55, Asp-271, and His-274. The feruloyl esterase stretch occupies residues 297-671 (YEPKRPYIEM…NEFIPHLFKK (375 aa)).

The protein in the N-terminal section; belongs to the carbohydrate esterase 6 family.

The enzyme catalyses feruloyl-polysaccharide + H2O = ferulate + polysaccharide.. It participates in glycan degradation; xylan degradation. Functionally, involved in degradation of plant cell wall polysaccharides. Bifunctional esterase that possesses both acetyl esterase and ferulic acid esterase activities. Has deacetylase activity towards acetylated xylo-oligosaccharides smaller than xylo-heptaose, as well as from glucose-pentaacetate. Is also able to release ferulic acid from methylferulate, and from the more natural substrates wheat bran, corn fiber, and XOS(FA,Ac), a corn fiber-derived substrate enriched in O-acetyl and ferulic acid esters. In Xylanibacter ruminicola (strain ATCC 19189 / DSM 19721 / CIP 105475 / JCM 8958 / 23) (Prevotella ruminicola), this protein is Carbohydrate acetyl esterase/feruloyl esterase.